A 104-amino-acid chain; its full sequence is PTS system lactose-specific EIIA component (104 aa).

A PTS EIIA type-3 domain is found at 1–102 (MNRDEVQLLG…MKHLIELYKK (102 aa)). Histidine 78 serves as the catalytic Tele-phosphohistidine intermediate. Position 78 is a phosphohistidine; by HPr (histidine 78). Position 81 (aspartate 81) interacts with Mg(2+).

In terms of assembly, homotrimer. Mg(2+) is required as a cofactor.

Its subcellular location is the cytoplasm. In terms of biological role, the phosphoenolpyruvate-dependent sugar phosphotransferase system (sugar PTS), a major carbohydrate active transport system, catalyzes the phosphorylation of incoming sugar substrates concomitantly with their translocation across the cell membrane. The enzyme II LacEF PTS system is involved in lactose transport. The protein is PTS system lactose-specific EIIA component of Staphylococcus epidermidis (strain ATCC 35984 / DSM 28319 / BCRC 17069 / CCUG 31568 / BM 3577 / RP62A).